We begin with the raw amino-acid sequence, 90 residues long: Mitochondrial import inner membrane translocase subunit Tim10 (90 aa).

The Twin CX3C motif motif lies at 29 to 54; sequence CHRKCVPPHYKEAELSKGESVCLDRC. Disulfide bonds link cysteine 29-cysteine 54 and cysteine 33-cysteine 50.

This sequence belongs to the small Tim family. As to quaternary structure, heterohexamer; composed of 3 copies of TIMM9 and 3 copies of TIMM10/TIM10A, named soluble 70 kDa complex. The complex forms a 6-bladed alpha-propeller structure and associates with the TIMM22 component of the TIM22 complex. Interacts with multi-pass transmembrane proteins in transit. Also forms a complex composed of TIMM9, TIMM10/TIM10A and FXC1/TIM10B.

The protein resides in the mitochondrion inner membrane. In terms of biological role, mitochondrial intermembrane chaperone that participates in the import and insertion of multi-pass transmembrane proteins into the mitochondrial inner membrane. May also be required for the transfer of beta-barrel precursors from the TOM complex to the sorting and assembly machinery (SAM complex) of the outer membrane. Acts as a chaperone-like protein that protects the hydrophobic precursors from aggregation and guide them through the mitochondrial intermembrane space. This chain is Mitochondrial import inner membrane translocase subunit Tim10 (TIMM10), found in Bos taurus (Bovine).